A 304-amino-acid polypeptide reads, in one-letter code: Glutaminase (304 aa).

Residues S63, N113, E157, N164, Y188, Y240, and V258 each contribute to the substrate site.

Belongs to the glutaminase family. In terms of assembly, homotetramer.

The catalysed reaction is L-glutamine + H2O = L-glutamate + NH4(+). This chain is Glutaminase, found in Chromobacterium violaceum (strain ATCC 12472 / DSM 30191 / JCM 1249 / CCUG 213 / NBRC 12614 / NCIMB 9131 / NCTC 9757 / MK).